The following is a 290-amino-acid chain: 4-hydroxy-tetrahydrodipicolinate synthase (290 aa).

Thr-44 is a pyruvate binding site. The active-site Proton donor/acceptor is Tyr-132. Lys-160 serves as the catalytic Schiff-base intermediate with substrate. Ile-202 lines the pyruvate pocket.

Belongs to the DapA family. As to quaternary structure, homotetramer; dimer of dimers.

It localises to the cytoplasm. It carries out the reaction L-aspartate 4-semialdehyde + pyruvate = (2S,4S)-4-hydroxy-2,3,4,5-tetrahydrodipicolinate + H2O + H(+). The protein operates within amino-acid biosynthesis; L-lysine biosynthesis via DAP pathway; (S)-tetrahydrodipicolinate from L-aspartate: step 3/4. Functionally, catalyzes the condensation of (S)-aspartate-beta-semialdehyde [(S)-ASA] and pyruvate to 4-hydroxy-tetrahydrodipicolinate (HTPA). This Legionella pneumophila (strain Corby) protein is 4-hydroxy-tetrahydrodipicolinate synthase.